Reading from the N-terminus, the 156-residue chain is Persephin (156 aa).

A signal peptide spans 1–21 (MAAGRLRILFLLLLSLHLGLG). 3 disulfides stabilise this stretch: Cys66–Cys124, Cys93–Cys152, and Cys97–Cys154.

This sequence belongs to the TGF-beta family. GDNF subfamily. In terms of assembly, homodimer; disulfide-linked. Interacts with GFRA4 coreceptor and RET: forms a 2:2:2 ternary complex composed of PSPN ligand, GFRA4 and RET receptor. Expressed at low levels in substantia nigra. Cochlea.

It is found in the secreted. Functionally, growth factor that exhibits neurotrophic activity on mesencephalic dopaminergic and motor neurons. Acts by binding to its coreceptor, GFRA4, leading to autophosphorylation and activation of the RET receptor. This Rattus norvegicus (Rat) protein is Persephin.